A 71-amino-acid chain; its full sequence is Small ribosomal subunit protein bS21 (71 aa).

The segment covering 48 to 59 (AKASAVKRHAKK) has biased composition (basic residues). The interval 48–71 (AKASAVKRHAKKLSRENARRIRLY) is disordered. Basic and acidic residues predominate over residues 60–71 (LSRENARRIRLY).

The protein belongs to the bacterial ribosomal protein bS21 family.

The sequence is that of Small ribosomal subunit protein bS21 from Aeromonas hydrophila subsp. hydrophila (strain ATCC 7966 / DSM 30187 / BCRC 13018 / CCUG 14551 / JCM 1027 / KCTC 2358 / NCIMB 9240 / NCTC 8049).